A 447-amino-acid polypeptide reads, in one-letter code: Ribulose bisphosphate carboxylase large chain (447 aa).

The substrate site is built by asparagine 89 and threonine 139. Lysine 141 functions as the Proton acceptor in the catalytic mechanism. Lysine 143 provides a ligand contact to substrate. Residues lysine 167, aspartate 169, and glutamate 170 each coordinate Mg(2+). An N6-carboxylysine modification is found at lysine 167. The active-site Proton acceptor is the histidine 260. Substrate-binding residues include arginine 261, histidine 293, and serine 345.

Belongs to the RuBisCO large chain family. Type I subfamily. Heterohexadecamer of 8 large chains and 8 small chains; disulfide-linked. The disulfide link is formed within the large subunit homodimers. Mg(2+) is required as a cofactor. Post-translationally, the disulfide bond which can form in the large chain dimeric partners within the hexadecamer appears to be associated with oxidative stress and protein turnover.

It localises to the plastid. The protein localises to the chloroplast. The catalysed reaction is 2 (2R)-3-phosphoglycerate + 2 H(+) = D-ribulose 1,5-bisphosphate + CO2 + H2O. The enzyme catalyses D-ribulose 1,5-bisphosphate + O2 = 2-phosphoglycolate + (2R)-3-phosphoglycerate + 2 H(+). Functionally, ruBisCO catalyzes two reactions: the carboxylation of D-ribulose 1,5-bisphosphate, the primary event in carbon dioxide fixation, as well as the oxidative fragmentation of the pentose substrate in the photorespiration process. Both reactions occur simultaneously and in competition at the same active site. The polypeptide is Ribulose bisphosphate carboxylase large chain (Ligustrum vulgare (Common privet)).